Reading from the N-terminus, the 224-residue chain is Cytosolic-abundant heat soluble protein 77580 (224 aa).

The segment covering 1 to 13 (MSNYQQESSYQYS) has biased composition (low complexity). The segment at 1 to 38 (MSNYQQESSYQYSDRSNNGQQQEQQEKKEVEHSSYTHT) is disordered. Over residues 24–38 (QQEKKEVEHSSYTHT) the composition is skewed to basic and acidic residues. The stretch at 83 to 191 (VIDTEAETEE…KRVLERSKFH (109 aa)) forms a coiled coil. CAHS motif regions lie at residues 122–140 (YRKQ…LEKQ) and 159–177 (QKRQ…LERE). The segment covering 200 to 215 (AAAGSTHSGSSSVAVS) has biased composition (low complexity). Residues 200–224 (AAAGSTHSGSSSVAVSESEKFQTNN) form a disordered region.

The protein belongs to the Cytosolic-abundant heat soluble protein (CAHS) family.

It localises to the cytoplasm. Functionally, CAHS proteins are cytosolic heat soluble proteins that seem to contribute to the anhydrobiosis in tardigrades, but their specific mechanisms are yet to be identified. It is possible that protection during anhydrobiosis might occur via the stabilization of vitrifying small molecules such as sugars, but not via the direct glass transition of CAHS proteins themselves. The polypeptide is Cytosolic-abundant heat soluble protein 77580 (Hypsibius exemplaris (Freshwater tardigrade)).